Here is a 95-residue protein sequence, read N- to C-terminus: Envelope glycoprotein N (95 aa).

A signal peptide spans 1 to 26 (MGLMDIHNAVCSLVIGVAILIATSQA). Topologically, residues 27–55 (TFVDWGSSITSMGDFWESTCSAVGVSIAF) are virion surface. The helical transmembrane segment at 56 to 76 (SSGFSVLFYMGLVAVISALLA) threads the bilayer. The Intravirion segment spans residues 77-95 (GSYHACFRLFTADMFKEEW).

Belongs to the herpesviridae glycoprotein N family. As to quaternary structure, interacts (via N-terminus) with gM (via N-terminus). The gM-gN heterodimer forms the gCII complex.

It is found in the virion membrane. Its subcellular location is the host membrane. It localises to the host Golgi apparatus. The protein resides in the host trans-Golgi network. In terms of biological role, envelope glycoprotein necessary for proper maturation of gM and modulation of its membrane fusion activity. Also plays a critical role in virion morphogenesis. The protein is Envelope glycoprotein N of Gallus gallus (Chicken).